We begin with the raw amino-acid sequence, 200 residues long: ATP-dependent Clp protease proteolytic subunit 3 (200 aa).

Serine 101 (nucleophile) is an active-site residue. Residue histidine 126 is part of the active site.

It belongs to the peptidase S14 family. In terms of assembly, fourteen ClpP subunits assemble into 2 heptameric rings which stack back to back to give a disk-like structure with a central cavity, resembling the structure of eukaryotic proteasomes.

The protein localises to the cytoplasm. The enzyme catalyses Hydrolysis of proteins to small peptides in the presence of ATP and magnesium. alpha-casein is the usual test substrate. In the absence of ATP, only oligopeptides shorter than five residues are hydrolyzed (such as succinyl-Leu-Tyr-|-NHMec, and Leu-Tyr-Leu-|-Tyr-Trp, in which cleavage of the -Tyr-|-Leu- and -Tyr-|-Trp bonds also occurs).. In terms of biological role, cleaves peptides in various proteins in a process that requires ATP hydrolysis. Has a chymotrypsin-like activity. Plays a major role in the degradation of misfolded proteins. This is ATP-dependent Clp protease proteolytic subunit 3 from Synechococcus sp. (strain CC9902).